The chain runs to 322 residues: Ribokinase (322 aa).

Substrate contacts are provided by residues 25–27 (MTD), 53–57 (GKGAN), and Glu-154. ATP is bound by residues Asn-199, 235 to 240 (TLGAEG), and Thr-256. K(+) contacts are provided by Asp-263 and Thr-265. ATP contacts are provided by residues 268–269 (GD) and Asn-295. Asp-269 is a binding site for substrate. Asp-269 serves as the catalytic Proton acceptor. K(+)-binding residues include Ser-301, Ala-304, Gly-306, and Ser-310.

This sequence belongs to the carbohydrate kinase PfkB family. Ribokinase subfamily. Homodimer. It depends on Mg(2+) as a cofactor.

It is found in the cytoplasm. Its subcellular location is the nucleus. The enzyme catalyses D-ribose + ATP = D-ribose 5-phosphate + ADP + H(+). It functions in the pathway carbohydrate metabolism; D-ribose degradation; D-ribose 5-phosphate from beta-D-ribopyranose: step 2/2. Its activity is regulated as follows. Activated by a monovalent cation that binds near, but not in, the active site. The most likely occupant of the site in vivo is potassium. Ion binding induces a conformational change that may alter substrate affinity. Competitively inhibited by phosphonoacetic acid, etidronate, 2-carboxethylphosphonic acid, N-(phosphonomethyl)glycine, N-(phosphonomethyl)iminodiacetic acid and clodronate. Functionally, catalyzes the phosphorylation of ribose at O-5 in a reaction requiring ATP and magnesium. The resulting D-ribose-5-phosphate can then be used either for sythesis of nucleotides, histidine, and tryptophan, or as a component of the pentose phosphate pathway. This chain is Ribokinase, found in Homo sapiens (Human).